The following is a 522-amino-acid chain: Zinc finger protein 892 (522 aa).

Disordered stretches follow at residues 1-22 (MEPEGRGSLFEDSDLLHAGNPK) and 96-124 (AASQKHWETIPESKELTPEKDISEEESAP). Residues 100–116 (KHWETIPESKELTPEKD) are compositionally biased toward basic and acidic residues. 10 C2H2-type zinc fingers span residues 221–243 (WKCNECEKAFSYYSAFVLHQRIH), 249–271 (YECNECGKAFSQSIHLTLHQRIH), 277–299 (YECHECGKAFSHRSALIRHHIIH), 305–327 (YECNECGKAFNQSSYLTQHQRIH), 333–355 (YECNECGKAFSQSTFLTQHQVIH), 361–383 (YKCNECGKAFSDRSGLIQHQRTH), 389–411 (YECNECGKAFGYCSALTQHQRTH), 417–439 (YKCNDCAKAFSDRSALIRHQRTH), 445–467 (YKCKDCGKAFSQSSSLTKHQKTH), and 473–495 (YKCKECGKAFSQSSSLSQHQKTH).

The protein belongs to the krueppel C2H2-type zinc-finger protein family.

The protein resides in the nucleus. May be involved in transcriptional regulation. The protein is Zinc finger protein 892 of Homo sapiens (Human).